Here is a 176-residue protein sequence, read N- to C-terminus: CDP-archaeol synthase (176 aa).

Helical transmembrane passes span 41 to 61, 73 to 93, 114 to 134, and 138 to 158; these read GLIG…FLYN, IITV…KSYF, VVGS…LNWF, and FDSV…SPLL.

This sequence belongs to the CDP-archaeol synthase family. Mg(2+) serves as cofactor.

The protein localises to the cell membrane. The catalysed reaction is 2,3-bis-O-(geranylgeranyl)-sn-glycerol 1-phosphate + CTP + H(+) = CDP-2,3-bis-O-(geranylgeranyl)-sn-glycerol + diphosphate. It participates in membrane lipid metabolism; glycerophospholipid metabolism. Functionally, catalyzes the formation of CDP-2,3-bis-(O-geranylgeranyl)-sn-glycerol (CDP-archaeol) from 2,3-bis-(O-geranylgeranyl)-sn-glycerol 1-phosphate (DGGGP) and CTP. This reaction is the third ether-bond-formation step in the biosynthesis of archaeal membrane lipids. This chain is CDP-archaeol synthase, found in Methanocorpusculum labreanum (strain ATCC 43576 / DSM 4855 / Z).